The chain runs to 694 residues: Pentatricopeptide repeat-containing protein At3g12770 (694 aa).

PPR repeat units follow at residues 52–82 (SGFL…LPRP), 83–117 (QIFP…RVSP), 118–152 (DSFT…GFDA), 153–183 (DVFV…LPLP), 186–220 (TIVS…DVKP), 221–255 (DWVA…GLEI), 256–286 (EPDL…MKSP), 287–321 (NLIL…DVRP), 322–356 (DTIS…DYRD), 357–387 (DVFI…TLDR), 388–422 (DVVV…GVHP), 423–457 (NDVT…KINP), and 458–488 (QQQH…MPVQ). The segment at 493–568 (VWGALLSACK…DVGCSWVEVR (76 aa)) is type E motif. The interval 569–599 (GRLEAFRVGDKSHPRYEEIERQVEWIESRLK) is type E(+) motif. A type DYW motif region spans residues 600 to 694 (EGGFVANKDA…DGVCSCGDYW (95 aa)).

This sequence belongs to the PPR family. PCMP-H subfamily.

The sequence is that of Pentatricopeptide repeat-containing protein At3g12770 (PCMP-H43) from Arabidopsis thaliana (Mouse-ear cress).